Here is a 668-residue protein sequence, read N- to C-terminus: Protein ENTREP3 (668 aa).

The next 3 membrane-spanning stretches (helical) occupy residues 34-54 (LLTL…FSMV), 67-87 (SCPS…IVSW), and 91-111 (FTLV…LSMA). Asn160 is a glycosylation site (N-linked (GlcNAc...) asparagine). A helical membrane pass occupies residues 174 to 194 (LFSVCGLTICAAIICTLSAIV). Phosphoserine occurs at positions 358 and 389. Disordered stretches follow at residues 386 to 419 (FEES…PTAA), 442 to 503 (RVPR…SSDT), and 550 to 570 (SAEK…SGPA). A compositionally biased stretch (low complexity) spans 398–407 (AARSYSCSAP). At Ser493 the chain carries Phosphoserine. Phosphoserine is present on Ser574. 2 disordered regions span residues 597-620 (KAPD…WGRP) and 645-668 (GRRL…ETGL). Polar residues predominate over residues 655 to 668 (HSLSLNGGSRETGL).

The protein belongs to the ENTREP family. In terms of assembly, may interact with WWOX. In terms of tissue distribution, widely expressed.

The protein localises to the membrane. The sequence is that of Protein ENTREP3 from Homo sapiens (Human).